Consider the following 274-residue polypeptide: MDVRQSIHSAHAKTLDTQGLHNEFLVEKVFVADEYTMVYSHIDRIIVGGIMPITKTVSVGGEVGKQLGVSYFLERRELGVINIGGAGTITVDGQCYEIGHRDALYVGKGAKEVVFASIDTAIYYNCAPAHTTYPTKKVTPDEVSPVTLGDNLTSNRRTINKYFVPDVLETCQLSMGLTELAPGNLWNTMPCHTHERRMEVYFYFNMDDDACVFHMMGQPQETRHIVMHNEQAVISPSWSIHSGVGTKAYTFIWGMVGENQVFDDMDHVAVKDLR.

Residues His192, His194, Glu199, and His241 each coordinate Zn(2+).

It belongs to the KduI family. Zn(2+) is required as a cofactor.

It catalyses the reaction 5-dehydro-4-deoxy-D-glucuronate = 3-deoxy-D-glycero-2,5-hexodiulosonate. It functions in the pathway glycan metabolism; pectin degradation; 2-dehydro-3-deoxy-D-gluconate from pectin: step 4/5. In terms of biological role, catalyzes the isomerization of 5-dehydro-4-deoxy-D-glucuronate to 3-deoxy-D-glycero-2,5-hexodiulosonate. The chain is 4-deoxy-L-threo-5-hexosulose-uronate ketol-isomerase from Shigella boydii serotype 18 (strain CDC 3083-94 / BS512).